The following is a 373-amino-acid chain: Histidinol-phosphate aminotransferase (373 aa).

N6-(pyridoxal phosphate)lysine is present on K230.

It belongs to the class-II pyridoxal-phosphate-dependent aminotransferase family. Histidinol-phosphate aminotransferase subfamily. In terms of assembly, homodimer. It depends on pyridoxal 5'-phosphate as a cofactor.

It carries out the reaction L-histidinol phosphate + 2-oxoglutarate = 3-(imidazol-4-yl)-2-oxopropyl phosphate + L-glutamate. It functions in the pathway amino-acid biosynthesis; L-histidine biosynthesis; L-histidine from 5-phospho-alpha-D-ribose 1-diphosphate: step 7/9. The chain is Histidinol-phosphate aminotransferase from Synechococcus elongatus (strain ATCC 33912 / PCC 7942 / FACHB-805) (Anacystis nidulans R2).